Reading from the N-terminus, the 153-residue chain is Ribosome maturation factor RimP (153 aa).

This sequence belongs to the RimP family.

The protein localises to the cytoplasm. Functionally, required for maturation of 30S ribosomal subunits. The polypeptide is Ribosome maturation factor RimP (Vesicomyosocius okutanii subsp. Calyptogena okutanii (strain HA)).